The primary structure comprises 208 residues: Adenylate kinase (208 aa).

An ATP-binding site is contributed by 10–15 (GAGKGT). Positions 30-59 (STGEMLRAAVAAGTPVGLKAKDVMASGGLV) are NMP. Residues threonine 31, arginine 36, 57 to 59 (GLV), 85 to 88 (GFPR), and glutamine 92 contribute to the AMP site. Positions 126-142 (SRVAEMTARGEQVRADD) are LID. Position 127 (arginine 127) interacts with ATP. The AMP site is built by arginine 139 and arginine 150. Methionine 178 contacts ATP.

It belongs to the adenylate kinase family. Monomer.

The protein resides in the cytoplasm. It catalyses the reaction AMP + ATP = 2 ADP. The protein operates within purine metabolism; AMP biosynthesis via salvage pathway; AMP from ADP: step 1/1. In terms of biological role, catalyzes the reversible transfer of the terminal phosphate group between ATP and AMP. Plays an important role in cellular energy homeostasis and in adenine nucleotide metabolism. The polypeptide is Adenylate kinase (Nitrobacter hamburgensis (strain DSM 10229 / NCIMB 13809 / X14)).